Here is a 91-residue protein sequence, read N- to C-terminus: Potassium channel toxin TtrKIK (91 aa).

A signal peptide spans 1–25 (MVATNRCCVFALLFALLLVHSLTEA). A propeptide spanning residues 26-44 (GKGKEVLGKIKDKLIEAKD) is cleaved from the precursor. One can recognise a BetaSPN-type CS-alpha/beta domain in the interval 58–91 (EYACPAIEKFCEDHCAAKKAVGKCDDFKCNCIKL). 3 cysteine pairs are disulfide-bonded: Cys-61/Cys-81, Cys-68/Cys-86, and Cys-72/Cys-88.

The protein belongs to the long chain scorpion toxin family. Class 2 subfamily. As to expression, expressed by the venom gland.

It localises to the secreted. Functionally, the full peptide presents antibacterial and cytotoxic activities. The synthetic C-terminus (AA 33-76) inhibits voltage-gated potassium channels Kv1.1/KCNA1, Kv1.2/KCNA2, and Kv1.3/KCNA3. The protein is Potassium channel toxin TtrKIK of Tityus trivittatus (Argentinean scorpion).